Reading from the N-terminus, the 110-residue chain is Small ribosomal subunit protein bS16 (110 aa).

The segment at K84 to S110 is disordered. Over residues N90–Q103 the composition is skewed to basic and acidic residues.

It belongs to the bacterial ribosomal protein bS16 family.

The chain is Small ribosomal subunit protein bS16 from Nitrobacter hamburgensis (strain DSM 10229 / NCIMB 13809 / X14).